Consider the following 333-residue polypeptide: Glyceraldehyde-3-phosphate dehydrogenase (333 aa).

Residues 12–13 (RI), D36, R80, and S120 each bind NAD(+). D-glyceraldehyde 3-phosphate is bound by residues 150-152 (SCT), T181, R196, 209-210 (TG), and R232. Catalysis depends on C151, which acts as the Nucleophile. N314 is a binding site for NAD(+).

It belongs to the glyceraldehyde-3-phosphate dehydrogenase family. In terms of assembly, homotetramer.

Its subcellular location is the cytoplasm. The enzyme catalyses D-glyceraldehyde 3-phosphate + phosphate + NAD(+) = (2R)-3-phospho-glyceroyl phosphate + NADH + H(+). It functions in the pathway carbohydrate degradation; glycolysis; pyruvate from D-glyceraldehyde 3-phosphate: step 1/5. Catalyzes the oxidative phosphorylation of glyceraldehyde 3-phosphate (G3P) to 1,3-bisphosphoglycerate (BPG) using the cofactor NAD. The first reaction step involves the formation of a hemiacetal intermediate between G3P and a cysteine residue, and this hemiacetal intermediate is then oxidized to a thioester, with concomitant reduction of NAD to NADH. The reduced NADH is then exchanged with the second NAD, and the thioester is attacked by a nucleophilic inorganic phosphate to produce BPG. The protein is Glyceraldehyde-3-phosphate dehydrogenase (gapB) of Cereibacter sphaeroides (Rhodobacter sphaeroides).